Reading from the N-terminus, the 297-residue chain is MASPQLCRALVSAQWVAEALRAPRAGQPLQLLDASWYLPKLGRDARREFEERHIPGAAFFDIDQCSDRTSPYDHMLPGAEHFAEYAGRLGVGAATHVVIYDASDQGLYSAPRVWWMFRAFGHHAVSLLDGGLRHWLRQNLPLSSGKSQPAPAEFRAQLDPAFIKTYEDIKENLESRRFQVVDSRATGRFRGTEPEPRDGIEPGHIPGTVNIPFTDFLSQEGLEKSPEEIRHLFQEKKVDLSKPLVATCGSGVTACHVALGAYLCGKPDVPIYDGSWVEWYMRARPEDVISEGRGKTH.

An N-acetylalanine modification is found at A2. Phosphoserine is present on residues S3, W15, P23, and S35. The Rhodanese 1 domain maps to 25 to 144 (AGQPLQLLDA…WLRQNLPLSS (120 aa)). The residue at position 40 (K40) is an N6-acetyllysine; alternate. K40 is modified (N6-succinyllysine; alternate). The interval 145–160 (GKSQPAPAEFRAQLDP) is hinge. N6-succinyllysine occurs at positions 146 and 164. Residues 174–288 (ESRRFQVVDS…WYMRARPEDV (115 aa)) form the Rhodanese 2 domain. R188 is a substrate binding site. The active-site Cysteine persulfide intermediate is the C248.

As to quaternary structure, monomer (active form). Homodimer; disulfide-linked (inactive form).

The protein localises to the cytoplasm. It is found in the mitochondrion. Its subcellular location is the synapse. The protein resides in the synaptosome. It carries out the reaction 2-oxo-3-sulfanylpropanoate + [thioredoxin]-dithiol = [thioredoxin]-disulfide + hydrogen sulfide + pyruvate + H(+). With respect to regulation, by oxidative stress, and thioredoxin. Under oxidative stress conditions, the catalytic cysteine site is converted to a sulfenate which inhibits the MPST enzyme activity. Reduced thioredoxin cleaves an intersubunit disulfide bond to turn on the redox switch and reactivate the enzyme. Functionally, transfer of a sulfur ion to cyanide or to other thiol compounds. Also has weak rhodanese activity. Detoxifies cyanide and is required for thiosulfate biosynthesis. Acts as an antioxidant. In combination with cysteine aminotransferase (CAT), contributes to the catabolism of cysteine and is an important producer of hydrogen sulfide in the brain, retina and vascular endothelial cells. Hydrogen sulfide H(2)S is an important synaptic modulator, signaling molecule, smooth muscle contractor and neuroprotectant. Its production by the 3MST/CAT pathway is regulated by calcium ions. This Homo sapiens (Human) protein is 3-mercaptopyruvate sulfurtransferase (MPST).